The following is a 520-amino-acid chain: 2-isopropylmalate synthase (520 aa).

In terms of domain architecture, Pyruvate carboxyltransferase spans 12–274 (VIIFDTTLRD…WNKIDTTQLT (263 aa)). Residues Asp21, His209, His211, and Asn245 each contribute to the Mn(2+) site. The interval 398–520 (KLTSLTVIAG…RDTVTTAAAS (123 aa)) is regulatory domain.

Belongs to the alpha-IPM synthase/homocitrate synthase family. LeuA type 1 subfamily. Homodimer. The cofactor is Mn(2+).

It is found in the cytoplasm. It catalyses the reaction 3-methyl-2-oxobutanoate + acetyl-CoA + H2O = (2S)-2-isopropylmalate + CoA + H(+). The protein operates within amino-acid biosynthesis; L-leucine biosynthesis; L-leucine from 3-methyl-2-oxobutanoate: step 1/4. Catalyzes the condensation of the acetyl group of acetyl-CoA with 3-methyl-2-oxobutanoate (2-ketoisovalerate) to form 3-carboxy-3-hydroxy-4-methylpentanoate (2-isopropylmalate). This chain is 2-isopropylmalate synthase, found in Bradyrhizobium diazoefficiens (strain JCM 10833 / BCRC 13528 / IAM 13628 / NBRC 14792 / USDA 110).